Here is a 115-residue protein sequence, read N- to C-terminus: NAD(P)H-quinone oxidoreductase subunit M (115 aa).

This sequence belongs to the complex I NdhM subunit family. NDH-1 can be composed of about 15 different subunits; different subcomplexes with different compositions have been identified which probably have different functions.

It is found in the cellular thylakoid membrane. It carries out the reaction a plastoquinone + NADH + (n+1) H(+)(in) = a plastoquinol + NAD(+) + n H(+)(out). The catalysed reaction is a plastoquinone + NADPH + (n+1) H(+)(in) = a plastoquinol + NADP(+) + n H(+)(out). NDH-1 shuttles electrons from an unknown electron donor, via FMN and iron-sulfur (Fe-S) centers, to quinones in the respiratory and/or the photosynthetic chain. The immediate electron acceptor for the enzyme in this species is believed to be plastoquinone. Couples the redox reaction to proton translocation, and thus conserves the redox energy in a proton gradient. Cyanobacterial NDH-1 also plays a role in inorganic carbon-concentration. The polypeptide is NAD(P)H-quinone oxidoreductase subunit M (Trichodesmium erythraeum (strain IMS101)).